Here is a 370-residue protein sequence, read N- to C-terminus: mRNA cap guanine-N(7) methyltransferase 1 (370 aa).

Residues 1 to 11 (MKRGFSDSPSS) are compositionally biased toward low complexity. Residues 1–34 (MKRGFSDSPSSSAPPPSSRFKSNPEGDSQFLEDE) are disordered. The mRNA cap 0 methyltransferase domain maps to 61–341 (SPIIHLKKLN…LYLSFVLRKR (281 aa)). 70-71 (NN) lines the mRNA pocket. S-adenosyl-L-methionine is bound by residues Lys74, Ala92, Asp114, 150 to 151 (DC), and 172 to 174 (QFA).

The protein belongs to the class I-like SAM-binding methyltransferase superfamily. mRNA cap 0 methyltransferase family.

Its subcellular location is the nucleus. It carries out the reaction a 5'-end (5'-triphosphoguanosine)-ribonucleoside in mRNA + S-adenosyl-L-methionine = a 5'-end (N(7)-methyl 5'-triphosphoguanosine)-ribonucleoside in mRNA + S-adenosyl-L-homocysteine. MRNA-capping methyltransferase that methylates the N7 position of the added guanosine to the 5'-cap structure of mRNAs. Binds RNA containing 5'-terminal GpppC. The sequence is that of mRNA cap guanine-N(7) methyltransferase 1 from Arabidopsis thaliana (Mouse-ear cress).